Consider the following 233-residue polypeptide: MIDQKVIVALDYDNQADALAFVDRIDPASCRLKVGKEMFTLFGPDFVRELHKRGFSVFLDLKFHDIPNTCSKAVRAAAELGVWMVNVHASGGERMMTASREILEPYGKDRPLLIGVTVLTSMEQSDLAGIGLDVAPQEQVIRLATLTKNSGLDGVVCSAQESSLLKNELGKEFKLVTPGIRPAGSEQGDQRRIMTPVDAIQAGSDYLVIGRPITQAADPASVLKSINDSLASM.

Substrate contacts are provided by residues Asp-11, Lys-33, 60–69, Thr-120, Arg-181, Gln-190, Gly-210, and Arg-211; that span reads DLKFHDIPNT. Residue Lys-62 is the Proton donor of the active site.

Belongs to the OMP decarboxylase family. Type 1 subfamily. In terms of assembly, homodimer.

The enzyme catalyses orotidine 5'-phosphate + H(+) = UMP + CO2. The protein operates within pyrimidine metabolism; UMP biosynthesis via de novo pathway; UMP from orotate: step 2/2. Functionally, catalyzes the decarboxylation of orotidine 5'-monophosphate (OMP) to uridine 5'-monophosphate (UMP). The sequence is that of Orotidine 5'-phosphate decarboxylase from Vibrio campbellii (strain ATCC BAA-1116).